Consider the following 424-residue polypeptide: Glutamate-1-semialdehyde 2,1-aminomutase (424 aa).

At Lys-260 the chain carries N6-(pyridoxal phosphate)lysine.

This sequence belongs to the class-III pyridoxal-phosphate-dependent aminotransferase family. HemL subfamily. The cofactor is pyridoxal 5'-phosphate.

The protein localises to the cytoplasm. It carries out the reaction (S)-4-amino-5-oxopentanoate = 5-aminolevulinate. It functions in the pathway porphyrin-containing compound metabolism; protoporphyrin-IX biosynthesis; 5-aminolevulinate from L-glutamyl-tRNA(Glu): step 2/2. The protein is Glutamate-1-semialdehyde 2,1-aminomutase of Nitrosopumilus maritimus (strain SCM1).